A 161-amino-acid chain; its full sequence is Ferredoxin/F(420)H(2)-dependent CoB-CoM heterodisulfide reductase subunit C (161 aa).

4Fe-4S ferredoxin-type domains lie at Lys-10–Arg-40 and Ala-51–Ile-82. [4Fe-4S] cluster is bound by residues Cys-19, Cys-22, Cys-25, Cys-29, Cys-62, Cys-65, Cys-68, and Cys-72.

The protein belongs to the HdrC family. The ferredoxin/F(420)H(2)-dependent CoB-CoM heterodisulfide reductase is composed of three subunits; HdrA2, HdrB2 and HdrC2. [4Fe-4S] cluster is required as a cofactor.

It is found in the cytoplasm. The enzyme catalyses coenzyme B + coenzyme M + 2 oxidized [2Fe-2S]-[ferredoxin] = coenzyme M-coenzyme B heterodisulfide + 2 reduced [2Fe-2S]-[ferredoxin] + 2 H(+). It carries out the reaction coenzyme B + 2 oxidized coenzyme F420-(gamma-L-Glu)(n) + coenzyme M + 2 reduced [2Fe-2S]-[ferredoxin] + 4 H(+) = coenzyme M-coenzyme B heterodisulfide + 2 reduced coenzyme F420-(gamma-L-Glu)(n) + 2 oxidized [2Fe-2S]-[ferredoxin]. Its pathway is cofactor metabolism; coenzyme M-coenzyme B heterodisulfide reduction; coenzyme B and coenzyme M from coenzyme M-coenzyme B heterodisulfide: step 1/1. In terms of biological role, part of a complex that catalyzes the reversible reduction of CoM-S-S-CoB to the thiol-coenzymes H-S-CoM (coenzyme M) and H-S-CoB (coenzyme B). Catalyzes the transfer of electrons from ferredoxin to CoM-S-S-CoB during methanogenesis from acetate. Electrons transfer from ferredoxin to CoM-S-S-CoB via HdrA2, HdrC2 and HdrB2. In addition, the complex can use electron bifurcation to direct electron pairs from reduced coenzyme F420 towards the reduction of both ferredoxin and CoB-CoM heterodisulfide. This activity may take place during Fe(III)-dependent anaerobic methane oxidation. The chain is Ferredoxin/F(420)H(2)-dependent CoB-CoM heterodisulfide reductase subunit C from Methanosarcina acetivorans (strain ATCC 35395 / DSM 2834 / JCM 12185 / C2A).